The following is a 71-amino-acid chain: Phosphatidylinositol N-acetylglucosaminyltransferase subunit Y (71 aa).

Met1 is a topological domain (cytoplasmic). The helical transmembrane segment at 2–21 threads the bilayer; it reads FFSLPVLTVLIPLVSLTGLL. At 22-44 the chain is on the lumenal side; it reads YSASVEEDFPNGCTSTASLCFYS. A helical membrane pass occupies residues 45 to 65; it reads LLLPITLPVYVFFHLWTWMGL. At 66 to 71 the chain is on the cytoplasmic side; the sequence is KLFRHN.

In terms of assembly, component of the glycosylphosphatidylinositol-N-acetylglucosaminyltransferase (GPI-GnT) complex composed at least by PIGA, PIGC, PIGH, PIGP, PIGQ, PIGY and DPM2.

It is found in the endoplasmic reticulum membrane. It functions in the pathway glycolipid biosynthesis; glycosylphosphatidylinositol-anchor biosynthesis. In terms of biological role, part of the glycosylphosphatidylinositol-N-acetylglucosaminyltransferase (GPI-GnT) complex that catalyzes the transfer of N-acetylglucosamine from UDP-N-acetylglucosamine to phosphatidylinositol and participates in the first step of GPI biosynthesis. May act by regulating the catalytic subunit PIGA. The protein is Phosphatidylinositol N-acetylglucosaminyltransferase subunit Y of Xenopus tropicalis (Western clawed frog).